The chain runs to 116 residues: Large ribosomal subunit protein bL19 (116 aa).

Belongs to the bacterial ribosomal protein bL19 family.

In terms of biological role, this protein is located at the 30S-50S ribosomal subunit interface and may play a role in the structure and function of the aminoacyl-tRNA binding site. The sequence is that of Large ribosomal subunit protein bL19 from Clostridioides difficile (strain 630) (Peptoclostridium difficile).